Reading from the N-terminus, the 66-residue chain is UPF0370 protein YpfN (66 aa).

A helical transmembrane segment spans residues 4-24 (LAKYWWILVLVFLVGVLLNVI). The interval 39–66 (KPELPPHRDFNDKWDDEDDWPKKDQSKK) is disordered. The span at 42–51 (LPPHRDFNDK) shows a compositional bias: basic and acidic residues.

Belongs to the UPF0370 family.

It localises to the cell membrane. The polypeptide is UPF0370 protein YpfN (Salmonella arizonae (strain ATCC BAA-731 / CDC346-86 / RSK2980)).